The sequence spans 389 residues: PqqA peptide cyclase (389 aa).

A Radical SAM core domain is found at 19–234 (VGLPLWLLAE…TNEYRARLEA (216 aa)). Residues cysteine 33, cysteine 37, and cysteine 40 each contribute to the [4Fe-4S] cluster site.

The protein belongs to the radical SAM superfamily. PqqE family. As to quaternary structure, interacts with PqqD. The interaction is necessary for activity of PqqE. The cofactor is [4Fe-4S] cluster.

The enzyme catalyses [PQQ precursor protein] + S-adenosyl-L-methionine = E-Y cross-linked-[PQQ precursor protein] + 5'-deoxyadenosine + L-methionine + H(+). The protein operates within cofactor biosynthesis; pyrroloquinoline quinone biosynthesis. Its function is as follows. Catalyzes the cross-linking of a glutamate residue and a tyrosine residue in the PqqA protein as part of the biosynthesis of pyrroloquinoline quinone (PQQ). This Pseudomonas syringae pv. syringae (strain B728a) protein is PqqA peptide cyclase.